A 103-amino-acid polypeptide reads, in one-letter code: Large ribosomal subunit protein bL21 (103 aa).

It belongs to the bacterial ribosomal protein bL21 family. As to quaternary structure, part of the 50S ribosomal subunit. Contacts protein L20.

This protein binds to 23S rRNA in the presence of protein L20. The protein is Large ribosomal subunit protein bL21 of Ralstonia pickettii (strain 12J).